Reading from the N-terminus, the 1433-residue chain is Inositol hexakisphosphate and diphosphoinositol-pentakisphosphate kinase 1 (1433 aa).

Lys64 to Lys65 contacts substrate. Residues Arg145, Lys198, His205, Arg224, Glu248–Met251, and Asp257–Lys259 contribute to the ATP site. Arg224–Lys225 contributes to the substrate binding site. Substrate contacts are provided by Lys259 and Arg273. ATP-binding positions include Ser275, Asp320, and Asp332–Asn334. Position 337-340 (Ser337–Lys340) interacts with substrate. The tract at residues Pro382–Ala453 is polyphosphoinositide-binding domain. A disordered region spans residues Gly915–Gly1020. 2 positions are modified to phosphoserine: Ser944 and Ser987. The segment covering Phe1005 to Gly1020 has biased composition (polar residues). A phosphoserine mark is found at Ser1037 and Ser1073. Residues Met1134 to Pro1143 are compositionally biased toward polar residues. Disordered regions lie at residues Met1134–Ser1199 and Glu1235–Pro1257. Ser1145 and Ser1152 each carry phosphoserine. A compositionally biased stretch (low complexity) spans Ser1168–Val1186. Polar residues-rich tracts occupy residues Asp1187–Ser1199 and Pro1236–Pro1250.

The protein belongs to the histidine acid phosphatase family. VIP1 subfamily. Widely expressed, with a higher expression in skeletal muscle, heart and brain.

Its subcellular location is the cytoplasm. It localises to the cytosol. The protein resides in the cell membrane. The catalysed reaction is 1D-myo-inositol hexakisphosphate + ATP = 1-diphospho-1D-myo-inositol 2,3,4,5,6-pentakisphosphate + ADP. It catalyses the reaction 5-diphospho-1D-myo-inositol 1,2,3,4,6-pentakisphosphate + ATP + H(+) = 1,5-bis(diphospho)-1D-myo-inositol 2,3,4,6-tetrakisphosphate + ADP. Functionally, bifunctional inositol kinase that acts in concert with the IP6K kinases IP6K1, IP6K2 and IP6K3 to synthesize the diphosphate group-containing inositol pyrophosphates diphosphoinositol pentakisphosphate, PP-InsP5, and bis-diphosphoinositol tetrakisphosphate, (PP)2-InsP4. PP-InsP5 and (PP)2-InsP4, also respectively called InsP7 and InsP8, regulate a variety of cellular processes, including apoptosis, vesicle trafficking, cytoskeletal dynamics, exocytosis, insulin signaling and neutrophil activation. Phosphorylates inositol hexakisphosphate (InsP6) at position 1 to produce PP-InsP5 which is in turn phosphorylated by IP6Ks to produce (PP)2-InsP4. Alternatively, phosphorylates PP-InsP5 at position 1, produced by IP6Ks from InsP6, to produce (PP)2-InsP4. Activated when cells are exposed to hyperosmotic stress. This chain is Inositol hexakisphosphate and diphosphoinositol-pentakisphosphate kinase 1, found in Homo sapiens (Human).